The chain runs to 410 residues: Neuroserpin (410 aa).

Positions 1–16 (MAYLGLLSLVALQSLV) are cleaved as a signal peptide. S83 bears the Phosphoserine mark. Residues N157, N321, and N401 are each glycosylated (N-linked (GlcNAc...) asparagine). O-linked (Xyl...) (chondroitin sulfate) serine glycosylation is present at S403.

This sequence belongs to the serpin family. As to expression, detected in adult pituitary and adrenal gland.

It is found in the secreted. The protein localises to the cytoplasmic vesicle. It localises to the secretory vesicle lumen. Its subcellular location is the perikaryon. Functionally, serine protease inhibitor that inhibits plasminogen activators and plasmin but not thrombin. May be involved in the formation or reorganization of synaptic connections as well as for synaptic plasticity in the adult nervous system. May protect neurons from cell damage by tissue-type plasminogen activator. In Rattus norvegicus (Rat), this protein is Neuroserpin (Serpini1).